A 283-amino-acid polypeptide reads, in one-letter code: MSGITAALVKELRERTGAGMMECKKALVEANGDIELAIDNMRKSGQAKAAKKAGRVAAEGIILAEVAADGKFGALVELNCETDFVAKDAGFIAFGKEVMATVLADKISDIETLKAKFEEQRTALVAKIGENINIRRVSVLEGEQLGTYLHGARIGVLVAAEGANEELIKHVAMHIAASKPEYVNPSDVPADVVDREHQIQLDIAMQSGKPREIAEKMVSGRMNKFTGEISLTGQNFVMDPSKTVGDLLKENNATVTSFIRYEVGEGIEKVETDFAAEVAAMSK.

Residues 82-85 (TDFV) form an involved in Mg(2+) ion dislocation from EF-Tu region.

Belongs to the EF-Ts family.

It localises to the cytoplasm. In terms of biological role, associates with the EF-Tu.GDP complex and induces the exchange of GDP to GTP. It remains bound to the aminoacyl-tRNA.EF-Tu.GTP complex up to the GTP hydrolysis stage on the ribosome. This chain is Elongation factor Ts, found in Photorhabdus laumondii subsp. laumondii (strain DSM 15139 / CIP 105565 / TT01) (Photorhabdus luminescens subsp. laumondii).